The chain runs to 471 residues: Putative multidrug resistance protein MdtD (471 aa).

The Periplasmic segment spans residues 1-11; it reads MTDLPDNTRWQ. The helical transmembrane segment at 12-32 threads the bilayer; sequence LWIVAFGFFMQSLDTTIVNTA. The Cytoplasmic portion of the chain corresponds to 33 to 48; that stretch reads LPSMAQSLGESPLHMH. The helical transmembrane segment at 49-69 threads the bilayer; it reads MVIVSYVLTVAVMLPASGWLA. The Periplasmic segment spans residues 70-76; it reads DKVGVRN. Residues 77–97 traverse the membrane as a helical segment; the sequence is IFFTAIVLFTLGSLFCALSGT. At 98–101 the chain is on the cytoplasmic side; it reads LNEL. Residues 102–124 traverse the membrane as a helical segment; it reads LLARALQGVGGAMMVPVGRLTVM. At 125 to 137 the chain is on the periplasmic side; that stretch reads KIVPREQYMAAMT. Residues 138-158 form a helical membrane-spanning segment; it reads FVTLPGQVGPLLGPALGGLLV. Residues 159 to 164 lie on the Cytoplasmic side of the membrane; sequence EYASWH. Residues 165-185 traverse the membrane as a helical segment; it reads WIFLINIPVGIIGAIATLMLM. Over 186-196 the chain is Periplasmic; the sequence is PNYTMQTRRFD. The helical transmembrane segment at 197-217 threads the bilayer; it reads LSGFLLLAIGMAVLTLALDGS. Topologically, residues 218–224 are cytoplasmic; the sequence is KGTGLSP. Residues 225–245 form a helical membrane-spanning segment; that stretch reads LAITGLVAVGVVALVLYLLHA. Residues 246–262 are Periplasmic-facing; sequence RNNNRALFSLKLFRTRT. The helical transmembrane segment at 263 to 283 threads the bilayer; it reads FSLGLAGSFAGRIGSGMLPFM. Over 284–285 the chain is Cytoplasmic; the sequence is TP. Residues 286–306 traverse the membrane as a helical segment; the sequence is VFLQIGLGFSPFHAGLMMIPM. Residues 307-341 lie on the Periplasmic side of the membrane; that stretch reads VLGSMGMKRIVVQVVNRFGYRRVLVATTLGLSLVT. The helical transmembrane segment at 342–362 threads the bilayer; sequence LLFMTTALLGWYYVLPFVLFL. Residues 363 to 395 lie on the Cytoplasmic side of the membrane; the sequence is QGMVNSTRFSSMNTLTLKDLPDNLASSGNSLLS. The chain crosses the membrane as a helical span at residues 396-416; the sequence is MIMQLSMSIGVTIAGLLLGLF. Residues 417–430 lie on the Periplasmic side of the membrane; sequence GSQHVSVDSGTTQT. A helical transmembrane segment spans residues 431-451; it reads VFMYTWLSMAFIIALPAFIFA. The Cytoplasmic portion of the chain corresponds to 452-471; sequence RVPNDTHQNVAISRRKRSAQ.

This sequence belongs to the major facilitator superfamily. TCR/Tet family.

The protein localises to the cell inner membrane. The protein is Putative multidrug resistance protein MdtD of Escherichia coli O17:K52:H18 (strain UMN026 / ExPEC).